Reading from the N-terminus, the 1191-residue chain is DNA-directed RNA polymerase subunit beta (1191 aa).

Basic and acidic residues predominate over residues 1171–1181; it reads RVKQEAEEKQA. The segment at 1171–1191 is disordered; sequence RVKQEAEEKQAEQVSEVVQED. The segment covering 1182-1191 has biased composition (low complexity); that stretch reads EQVSEVVQED.

It belongs to the RNA polymerase beta chain family. The RNAP catalytic core consists of 2 alpha, 1 beta, 1 beta' and 1 omega subunit. When a sigma factor is associated with the core the holoenzyme is formed, which can initiate transcription.

It catalyses the reaction RNA(n) + a ribonucleoside 5'-triphosphate = RNA(n+1) + diphosphate. In terms of biological role, DNA-dependent RNA polymerase catalyzes the transcription of DNA into RNA using the four ribonucleoside triphosphates as substrates. The sequence is that of DNA-directed RNA polymerase subunit beta from Streptococcus agalactiae serotype Ia (strain ATCC 27591 / A909 / CDC SS700).